We begin with the raw amino-acid sequence, 101 residues long: Small ribosomal subunit protein uS10 (101 aa).

This sequence belongs to the universal ribosomal protein uS10 family. In terms of assembly, part of the 30S ribosomal subunit.

Its function is as follows. Involved in the binding of tRNA to the ribosomes. The sequence is that of Small ribosomal subunit protein uS10 from Cytophaga hutchinsonii (strain ATCC 33406 / DSM 1761 / CIP 103989 / NBRC 15051 / NCIMB 9469 / D465).